The chain runs to 41 residues: U3-theraphotoxin-Hs1a (41 aa).

Intrachain disulfides connect Cys-2–Cys-16, Cys-9–Cys-37, and Cys-17–Cys-40.

The protein belongs to the neurotoxin 14 (magi-1) family. 01 (HNTX-16) subfamily. In terms of tissue distribution, expressed by the venom gland.

It is found in the secreted. Functionally, intracerebroventricular injection paralyzes mice. Has no effect on voltage-gated sodium currents. The sequence is that of U3-theraphotoxin-Hs1a from Cyriopagopus schmidti (Chinese bird spider).